A 403-amino-acid polypeptide reads, in one-letter code: Argininosuccinate synthase (403 aa).

ATP contacts are provided by residues 13-21 (AYSGGLDTS) and alanine 40. The L-citrulline site is built by tyrosine 91 and serine 96. Glycine 121 contributes to the ATP binding site. The L-aspartate site is built by threonine 123, asparagine 127, and aspartate 128. Asparagine 127 serves as a coordination point for L-citrulline. Residues arginine 131, serine 180, serine 189, glutamate 265, and tyrosine 277 each contribute to the L-citrulline site.

Belongs to the argininosuccinate synthase family. Type 1 subfamily. In terms of assembly, homotetramer.

It localises to the cytoplasm. The catalysed reaction is L-citrulline + L-aspartate + ATP = 2-(N(omega)-L-arginino)succinate + AMP + diphosphate + H(+). The protein operates within amino-acid biosynthesis; L-arginine biosynthesis; L-arginine from L-ornithine and carbamoyl phosphate: step 2/3. The sequence is that of Argininosuccinate synthase from Leptospira interrogans serogroup Icterohaemorrhagiae serovar copenhageni (strain Fiocruz L1-130).